We begin with the raw amino-acid sequence, 357 residues long: Phenylalanine--tRNA ligase alpha subunit (357 aa).

Glu-257 is a binding site for Mg(2+).

Belongs to the class-II aminoacyl-tRNA synthetase family. Phe-tRNA synthetase alpha subunit type 1 subfamily. As to quaternary structure, tetramer of two alpha and two beta subunits. Mg(2+) is required as a cofactor.

Its subcellular location is the cytoplasm. The enzyme catalyses tRNA(Phe) + L-phenylalanine + ATP = L-phenylalanyl-tRNA(Phe) + AMP + diphosphate + H(+). The protein is Phenylalanine--tRNA ligase alpha subunit of Roseobacter denitrificans (strain ATCC 33942 / OCh 114) (Erythrobacter sp. (strain OCh 114)).